The sequence spans 456 residues: Probable glycine dehydrogenase (decarboxylating) subunit 1 (456 aa).

Belongs to the GcvP family. N-terminal subunit subfamily. As to quaternary structure, the glycine cleavage system is composed of four proteins: P, T, L and H. In this organism, the P 'protein' is a heterodimer of two subunits.

It carries out the reaction N(6)-[(R)-lipoyl]-L-lysyl-[glycine-cleavage complex H protein] + glycine + H(+) = N(6)-[(R)-S(8)-aminomethyldihydrolipoyl]-L-lysyl-[glycine-cleavage complex H protein] + CO2. Its function is as follows. The glycine cleavage system catalyzes the degradation of glycine. The P protein binds the alpha-amino group of glycine through its pyridoxal phosphate cofactor; CO(2) is released and the remaining methylamine moiety is then transferred to the lipoamide cofactor of the H protein. In Rhizorhabdus wittichii (strain DSM 6014 / CCUG 31198 / JCM 15750 / NBRC 105917 / EY 4224 / RW1) (Sphingomonas wittichii), this protein is Probable glycine dehydrogenase (decarboxylating) subunit 1.